A 62-amino-acid polypeptide reads, in one-letter code: uncharacterized protein (62 aa).

This is an uncharacterized protein from Escherichia coli.